Consider the following 122-residue polypeptide: Large ribosomal subunit protein eL18 (122 aa).

The protein belongs to the eukaryotic ribosomal protein eL18 family.

The sequence is that of Large ribosomal subunit protein eL18 from Picrophilus torridus (strain ATCC 700027 / DSM 9790 / JCM 10055 / NBRC 100828 / KAW 2/3).